A 294-amino-acid polypeptide reads, in one-letter code: Phosphatidylserine decarboxylase proenzyme (294 aa).

Catalysis depends on charge relay system; for autoendoproteolytic cleavage activity residues D100, H157, and S261. Catalysis depends on S261, which acts as the Schiff-base intermediate with substrate; via pyruvic acid; for decarboxylase activity. S261 bears the Pyruvic acid (Ser); by autocatalysis mark.

Belongs to the phosphatidylserine decarboxylase family. PSD-B subfamily. Prokaryotic type I sub-subfamily. As to quaternary structure, heterodimer of a large membrane-associated beta subunit and a small pyruvoyl-containing alpha subunit. Pyruvate is required as a cofactor. In terms of processing, is synthesized initially as an inactive proenzyme. Formation of the active enzyme involves a self-maturation process in which the active site pyruvoyl group is generated from an internal serine residue via an autocatalytic post-translational modification. Two non-identical subunits are generated from the proenzyme in this reaction, and the pyruvate is formed at the N-terminus of the alpha chain, which is derived from the carboxyl end of the proenzyme. The autoendoproteolytic cleavage occurs by a canonical serine protease mechanism, in which the side chain hydroxyl group of the serine supplies its oxygen atom to form the C-terminus of the beta chain, while the remainder of the serine residue undergoes an oxidative deamination to produce ammonia and the pyruvoyl prosthetic group on the alpha chain. During this reaction, the Ser that is part of the protease active site of the proenzyme becomes the pyruvoyl prosthetic group, which constitutes an essential element of the active site of the mature decarboxylase.

The protein localises to the cell membrane. The catalysed reaction is a 1,2-diacyl-sn-glycero-3-phospho-L-serine + H(+) = a 1,2-diacyl-sn-glycero-3-phosphoethanolamine + CO2. The protein operates within phospholipid metabolism; phosphatidylethanolamine biosynthesis; phosphatidylethanolamine from CDP-diacylglycerol: step 2/2. In terms of biological role, catalyzes the formation of phosphatidylethanolamine (PtdEtn) from phosphatidylserine (PtdSer). The sequence is that of Phosphatidylserine decarboxylase proenzyme from Mannheimia succiniciproducens (strain KCTC 0769BP / MBEL55E).